A 376-amino-acid polypeptide reads, in one-letter code: Carbamoyl phosphate synthase small chain (376 aa).

The nucleophile stretch occupies residues 1 to 181 (MSKAVLVLED…VEPDGPPGVS (181 aa)). The interval 1–183 (MSKAVLVLED…PDGPPGVSRF (183 aa)) is CPSase. L-glutamine is bound by residues serine 46, glycine 232, glycine 234, phenylalanine 261, glutamine 264, asparagine 302, glycine 304, and phenylalanine 305. Residues 184–376 (TVAALDLGIK…FVELMAGEGR (193 aa)) form the Glutamine amidotransferase type-1 domain. Residues histidine 350 and glutamate 352 contribute to the active site.

The protein belongs to the CarA family. As to quaternary structure, composed of two chains; the small (or glutamine) chain promotes the hydrolysis of glutamine to ammonia, which is used by the large (or ammonia) chain to synthesize carbamoyl phosphate. Tetramer of heterodimers (alpha,beta)4.

It catalyses the reaction hydrogencarbonate + L-glutamine + 2 ATP + H2O = carbamoyl phosphate + L-glutamate + 2 ADP + phosphate + 2 H(+). The catalysed reaction is L-glutamine + H2O = L-glutamate + NH4(+). The protein operates within amino-acid biosynthesis; L-arginine biosynthesis; carbamoyl phosphate from bicarbonate: step 1/1. It functions in the pathway pyrimidine metabolism; UMP biosynthesis via de novo pathway; (S)-dihydroorotate from bicarbonate: step 1/3. In terms of biological role, small subunit of the glutamine-dependent carbamoyl phosphate synthetase (CPSase). CPSase catalyzes the formation of carbamoyl phosphate from the ammonia moiety of glutamine, carbonate, and phosphate donated by ATP, constituting the first step of 2 biosynthetic pathways, one leading to arginine and/or urea and the other to pyrimidine nucleotides. The small subunit (glutamine amidotransferase) binds and cleaves glutamine to supply the large subunit with the substrate ammonia. The sequence is that of Carbamoyl phosphate synthase small chain from Mycobacterium tuberculosis (strain CDC 1551 / Oshkosh).